The chain runs to 476 residues: Thyroid receptor-interacting protein 6 (476 aa).

The span at 1–12 shows a compositional bias: pro residues; that stretch reads MSGPTWLPPKQP. Disordered stretches follow at residues 1 to 93 and 108 to 253; these read MSGP…PGSL and NGGR…QPPE. The residue at position 25 (R25) is an Asymmetric dimethylarginine; alternate. R25 carries the omega-N-methylarginine; alternate modification. At Y55 the chain carries Phosphotyrosine; by SRC. Residue S92 is modified to Phosphoserine. R111 is modified (omega-N-methylarginine). S142 carries the phosphoserine modification. The span at 152–167 shows a compositional bias: low complexity; that stretch reads PTPASYTTASTPAGPA. R179 and R186 each carry omega-N-methylarginine. At S189 the chain carries Phosphoserine. 3 positions are modified to omega-N-methylarginine: R205, R236, and R238. At S249 the chain carries Phosphoserine. LIM zinc-binding domains are found at residues 279–316, 339–398, and 399–467; these read CGGCGEDVVGDGAGVVALDRVFHVGCFVCSTCRAQLRG, CATC…FAPR, and CSVC…RIQE. The interval 469–476 is interaction with MAGI1 and PTPN13; the sequence is SATVTTDC.

The protein belongs to the zyxin/ajuba family. As to quaternary structure, specifically interacts with the ligand binding domain of the thyroid receptor (TR) in the presence of thyroid hormone. Interacts (via the third LIM domain and C-terminus) with PTPN13 (via the second PDZ domain). Interacts (via the second LIM domain or via the third LIM domain plus C-terminus) with PDLIM4 (via PDZ domain). Found in a complex with PTPN13 and PDLIM4. Interacts with SVIL isoform 2. Interacts with LPAR2 but not other LPA receptors. Interacts with PRKAA2. Interacts with MAGI1. Interacts with SCRIB. In case of infection, interacts with S.typhimurium protein sseI. Post-translationally, phosphorylation at Tyr-55 by SRC is required for enhancement of lysophosphatidic acid-induced cell migration. Tyr-55 is dephosphorylated by PTPN13. Abundantly expressed in kidney, liver and lung. Lower levels in heart, placenta and pancreas. Expressed in colonic epithelial cells. Up-regulated in colonic tumors.

The protein localises to the cytoplasm. It localises to the cytoskeleton. It is found in the cell junction. Its subcellular location is the focal adhesion. The protein resides in the nucleus. Its function is as follows. Relays signals from the cell surface to the nucleus to weaken adherens junction and promote actin cytoskeleton reorganization and cell invasiveness. Involved in lysophosphatidic acid-induced cell adhesion and migration. Acts as a transcriptional coactivator for NF-kappa-B and JUN, and mediates the transrepression of these transcription factors induced by glucocorticoid receptor. The sequence is that of Thyroid receptor-interacting protein 6 (TRIP6) from Homo sapiens (Human).